A 21-amino-acid chain; its full sequence is Kassinatuerin-1 (21 aa).

The residue at position 21 (isoleucine 21) is an Isoleucine amide.

In terms of tissue distribution, expressed by the skin dorsal glands.

It localises to the secreted. Functionally, shows broad-spectrum antimicrobial activity against the Gram-negative bacterium E.coli (MIC=6.25 uM), K.pneumoniae (MIC=25 uM), E.cloacae (MIC=6.25 uM), P.aeruginosa (MIC=25 uM), the Gram-positive bacterium S.aureus (MIC=6.25 uM), S.epidermidis (MIC=6.25 uM), E.faecalis (MIC=12.5 uM), and the fungus C.albicans (MIC=100 uM). Has no antimicrobial effect against P.mirabilis (MIC&gt;100 uM). Has relatively high cytolytic and hemolytic activities. Its alpha-helix has considerable amphipathic character. The polypeptide is Kassinatuerin-1 (Kassina senegalensis (Senegal running frog)).